Here is a 413-residue protein sequence, read N- to C-terminus: uncharacterized protein (413 aa).

Disordered stretches follow at residues 108–158 and 232–257; these read ESVP…SKIS and DRLG…RLGA. Ser-115 is modified (phosphoserine). The span at 127–139 shows a compositional bias: polar residues; it reads SAASRMIANSLNH. Phosphoserine is present on Ser-141. Residue Lys-239 forms a Glycyl lysine isopeptide (Lys-Gly) (interchain with G-Cter in SUMO2) linkage. Phosphoserine occurs at positions 269 and 296. The segment at 290-336 is disordered; that stretch reads RGPTKASAQPALTVKAKAASSATSTATTPKLRRLALPSRPGLQKKPD. A compositionally biased stretch (low complexity) spans 302 to 318; that stretch reads TVKAKAASSATSTATTP. At Ser-342 the chain carries Phosphoserine.

This is an uncharacterized protein from Mus musculus (Mouse).